A 407-amino-acid polypeptide reads, in one-letter code: uncharacterized protein (407 aa).

The first 27 residues, 1-27 (MRILAMTRAHNAGRTLAATLDSLAVFS), serve as a signal peptide directing secretion.

This is an uncharacterized protein from Mycobacterium bovis (strain ATCC BAA-935 / AF2122/97).